A 1241-amino-acid polypeptide reads, in one-letter code: DNA-directed RNA polymerase subunit beta (1241 aa).

It belongs to the RNA polymerase beta chain family. In terms of assembly, the RNAP catalytic core consists of 2 alpha, 1 beta, 1 beta' and 1 omega subunit. When a sigma factor is associated with the core the holoenzyme is formed, which can initiate transcription.

The catalysed reaction is RNA(n) + a ribonucleoside 5'-triphosphate = RNA(n+1) + diphosphate. Functionally, DNA-dependent RNA polymerase catalyzes the transcription of DNA into RNA using the four ribonucleoside triphosphates as substrates. This is DNA-directed RNA polymerase subunit beta from Clostridium botulinum (strain Alaska E43 / Type E3).